Reading from the N-terminus, the 102-residue chain is A-type ATP synthase subunit F (102 aa).

Belongs to the V-ATPase F subunit family. In terms of assembly, has multiple subunits with at least A(3), B(3), C, D, E, F, H, I and proteolipid K(x).

Its subcellular location is the cell membrane. Functionally, component of the A-type ATP synthase that produces ATP from ADP in the presence of a proton gradient across the membrane. This is A-type ATP synthase subunit F from Thermococcus gammatolerans (strain DSM 15229 / JCM 11827 / EJ3).